A 535-amino-acid chain; its full sequence is uncharacterized protein (535 aa).

The chain crosses the membrane as a helical span at residues 17–37 (IVLLCMIGFFCTTFMRIHFAL). N-linked (GlcNAc...) asparagine glycosylation is found at Asn-44 and Asn-61. A run of 6 helical transmembrane segments spans residues 107–127 (LIFS…MFFI), 144–164 (ILVT…SVFL), 167–187 (IGMG…IGNW), 199–219 (IFTL…AAVC), 225–245 (WPAT…LWFF), and 292–312 (AFLG…LFQI). A glycan (N-linked (GlcNAc...) asparagine) is linked at Asn-329. The next 5 membrane-spanning stretches (helical) occupy residues 331 to 351 (TFTA…GIGI), 368 to 388 (VSHG…AFFV), 395 to 415 (TGLI…SGFY), 429 to 451 (MSAI…MSMF), and 463 to 483 (IFIG…LFGS).

It belongs to the major facilitator superfamily. Sodium/anion cotransporter family.

The protein resides in the membrane. This is an uncharacterized protein from Caenorhabditis elegans.